The following is a 429-amino-acid chain: Patatin-like phospholipase domain-containing protein 5 (429 aa).

The 170-residue stretch at 12–181 folds into the PNPLA domain; the sequence is LSFSGAGYLG…SNNLPFADCP (170 aa). The GXGXXG signature appears at 16-21; that stretch reads GAGYLG. The GXSXG signature appears at 47 to 51; sequence GSSSG. Serine 49 serves as the catalytic Nucleophile. Aspartate 168 acts as the Proton acceptor in catalysis. The DGA/G motif lies at 168-170; the sequence is DGA.

As to expression, expressed in brain and pituitary gland.

It carries out the reaction a triacylglycerol + H2O = a diacylglycerol + a fatty acid + H(+). Its function is as follows. Has abundant triacylglycerol lipase activity. In Homo sapiens (Human), this protein is Patatin-like phospholipase domain-containing protein 5.